The chain runs to 363 residues: MNELLLNLVDPLHQWFLGLGDGGVVLWSVLKILLIAVPVIVAVAFYVVWERKLIGWMHVRHGPMYVGMGIFQAFADVFKLLFKEIVQPTSSHKAMFVIAPLLTLAPAFAAWSVVPFDAKLVLSNANVGLLYLLAMTSLGVYGIILAGWASNSKYAFLGAMRSAAQVVSYEIAMGFALVGVMIASGSVNLSQIVFAQAGNSGFFDWFLIPLFPLFIVYWVSGVAETNRAPFDVVEGESEIVAGHMVEYSGGAFALFFLAEYANMILVSFLISIFFLGGWLSPIQGWVNADVSPWIDWLWKGGWPWLLMKVFFFASAYIWFRASFPRYRYDQIMRLGWKVFIPLTIVWIAVTALMVFYGVIQKGV.

Transmembrane regions (helical) follow at residues 29–49 (VLKI…YVVW), 62–82 (GPMY…KLLF), 96–116 (FVIA…VVPF), 127–147 (VGLL…ILAG), 163–183 (AAQV…VMIA), 202–222 (FFDW…VSGV), 238–257 (EIVA…LFFL), 264–286 (ILVS…QGWV), 299–319 (KGGW…YIWF), and 339–359 (FIPL…YGVI).

This sequence belongs to the complex I subunit 1 family. As to quaternary structure, NDH-1 is composed of 14 different subunits. Subunits NuoA, H, J, K, L, M, N constitute the membrane sector of the complex.

The protein localises to the cell inner membrane. It carries out the reaction a quinone + NADH + 5 H(+)(in) = a quinol + NAD(+) + 4 H(+)(out). Its function is as follows. NDH-1 shuttles electrons from NADH, via FMN and iron-sulfur (Fe-S) centers, to quinones in the respiratory chain. The immediate electron acceptor for the enzyme in this species is believed to be ubiquinone. Couples the redox reaction to proton translocation (for every two electrons transferred, four hydrogen ions are translocated across the cytoplasmic membrane), and thus conserves the redox energy in a proton gradient. This subunit may bind ubiquinone. This Xanthomonas euvesicatoria pv. vesicatoria (strain 85-10) (Xanthomonas campestris pv. vesicatoria) protein is NADH-quinone oxidoreductase subunit H.